A 328-amino-acid polypeptide reads, in one-letter code: Flotillin-like protein FloA (328 aa).

The next 2 helical transmembrane spans lie at 9-29 (LLITGGGLIALAVFFTFVPVG) and 30-50 (LWISSFAAGVHVSIFTLIGMR).

Belongs to the flotillin-like FloA family. In terms of assembly, homooligomerizes.

It localises to the cell membrane. The protein resides in the membrane raft. In terms of biological role, found in functional membrane microdomains (FMM) that may be equivalent to eukaryotic membrane rafts. FMMs are highly dynamic and increase in number as cells age. Flotillins are thought to be important factors in membrane fluidity. The protein is Flotillin-like protein FloA of Exiguobacterium sp. (strain ATCC BAA-1283 / AT1b).